A 245-amino-acid chain; its full sequence is 14-3-3 protein theta (245 aa).

Position 1 is an N-acetylmethionine (M1). At K3 the chain carries N6-acetyllysine. K49 is subject to N6-acetyllysine; alternate. K49 is covalently cross-linked (Glycyl lysine isopeptide (Lys-Gly) (interchain with G-Cter in SUMO2); alternate). N6-acetyllysine is present on K68. 3'-nitrotyrosine is present on Y82. Position 92 is a phosphoserine (S92). 3'-nitrotyrosine is present on Y104. An N6-acetyllysine modification is found at K115. The residue at position 232 (S232) is a Phosphoserine; by CK1.

Belongs to the 14-3-3 family. As to quaternary structure, homodimer. Interacts with CDKN1B ('Thr-198' phosphorylated form); the interaction translocates CDKN1B to the cytoplasm. Interacts with SSH1. Interacts with GAB2. Interacts with RGS7 (phosphorylated form). Interacts with CDK16. Interacts with the 'Ser-241' phosphorylated form of PDPK1. Interacts with the 'Thr-369' phosphorylated form of DAPK2. Interacts with PI4KB, TBC1D22A and TBC1D22B. Interacts with SLITRK1. Interacts with RIPOR2. Interacts with INAVA; the interaction increases upon PRR (pattern recognition receptor) stimulation and is required for cellular signaling pathway activation and cytokine secretion. Interacts with MARK2, MARK3 and MARK4. Interacts with MEFV.

Its subcellular location is the cytoplasm. Its function is as follows. Adapter protein implicated in the regulation of a large spectrum of both general and specialized signaling pathways. Binds to a large number of partners, usually by recognition of a phosphoserine or phosphothreonine motif. Binding generally results in the modulation of the activity of the binding partner. Negatively regulates the kinase activity of PDPK1. In Mus musculus (Mouse), this protein is 14-3-3 protein theta (Ywhaq).